Consider the following 1490-residue polypeptide: ABC transporter CDR4 (1490 aa).

Residues 1–12 (MADADTSSNSSK) are compositionally biased toward polar residues. Disordered stretches follow at residues 1–26 (MADA…GTYQ) and 53–75 (LKRQ…LSGK). The Cytoplasmic segment spans residues 1 to 516 (MADADTSSNS…NILRIKGNPS (516 aa)). The span at 58-67 (SRQESQKSNE) shows a compositional bias: basic and acidic residues. One can recognise an ABC transporter 1 domain in the interval 151 to 407 (PKYLSLFFRE…FIDMGYECPQ (257 aa)). 6 consecutive transmembrane segments (helical) span residues 517–537 (IHLF…SIFY), 551–571 (AALF…IFSL), 601–621 (LPTK…MVNF), 626–646 (GNFF…SHIF), 659–679 (AMTP…FVIP), and 767–787 (FGIV…LCEI). Residues 788-1182 (NKGAMQKGEI…VFEQNWRTPS (395 aa)) lie on the Cytoplasmic side of the membrane. An ABC transporter 2 domain is found at 846–1090 (FFWRDLTYQV…LINYFEKYGA (245 aa)). 882–889 (GASGAGKT) contributes to the ATP binding site. 3 helical membrane passes run 1183–1203 (YLYS…FSFY), 1217–1237 (FSVF…LPTF), and 1268–1288 (IPWN…PVGL). The N-linked (GlcNAc...) asparagine glycan is linked to Asn1291. A run of 3 helical transmembrane segments spans residues 1304–1324 (FMWF…QLCI), 1333–1353 (AANL…VLVT), and 1370–1390 (FTYL…VTCA). N-linked (GlcNAc...) asparagine glycosylation is present at Asn1424. Residues 1455–1475 (IGIYIAFIGINIIGTFILYWF) form a helical membrane-spanning segment.

Belongs to the ABC transporter superfamily. ABCG family. PDR (TC 3.A.1.205) subfamily.

The protein resides in the membrane. The sequence is that of ABC transporter CDR4 (CDR4) from Candida albicans (Yeast).